The primary structure comprises 200 residues: Imidazole glycerol phosphate synthase subunit HisH (200 aa).

Positions 2-200 constitute a Glutamine amidotransferase type-1 domain; the sequence is KVAIVEYGVG…LGEVLTGASR (199 aa). The active-site Nucleophile is the Cys-79. Catalysis depends on residues His-179 and Glu-181.

In terms of assembly, heterodimer of HisH and HisF.

It is found in the cytoplasm. The enzyme catalyses 5-[(5-phospho-1-deoxy-D-ribulos-1-ylimino)methylamino]-1-(5-phospho-beta-D-ribosyl)imidazole-4-carboxamide + L-glutamine = D-erythro-1-(imidazol-4-yl)glycerol 3-phosphate + 5-amino-1-(5-phospho-beta-D-ribosyl)imidazole-4-carboxamide + L-glutamate + H(+). It catalyses the reaction L-glutamine + H2O = L-glutamate + NH4(+). It functions in the pathway amino-acid biosynthesis; L-histidine biosynthesis; L-histidine from 5-phospho-alpha-D-ribose 1-diphosphate: step 5/9. Functionally, IGPS catalyzes the conversion of PRFAR and glutamine to IGP, AICAR and glutamate. The HisH subunit catalyzes the hydrolysis of glutamine to glutamate and ammonia as part of the synthesis of IGP and AICAR. The resulting ammonia molecule is channeled to the active site of HisF. The sequence is that of Imidazole glycerol phosphate synthase subunit HisH from Methanopyrus kandleri (strain AV19 / DSM 6324 / JCM 9639 / NBRC 100938).